The primary structure comprises 476 residues: Protein Cep89 homolog (476 aa).

Disordered stretches follow at residues 1-29 (MSTR…KKNR) and 172-193 (LGEG…APYP). Residues 180–190 (GGSTKVSSSSA) show a composition bias toward polar residues.

Its subcellular location is the cytoplasm. It is found in the cytosol. It localises to the mitochondrion intermembrane space. In terms of biological role, required for mitochondrial complex IV activity. May be involved in non-associative learning. The protein is Protein Cep89 homolog (Cep89) of Drosophila melanogaster (Fruit fly).